Here is a 464-residue protein sequence, read N- to C-terminus: Galactose-proton symporter (464 aa).

The Cytoplasmic portion of the chain corresponds to 1-15; that stretch reads MPDAKKQGRSNKAMT. Residues 16–36 traverse the membrane as a helical segment; the sequence is FFVCFLAALAGLLFGLDIGVI. Topologically, residues 37–56 are periplasmic; that stretch reads AGALPFIADEFQITSHTQEW. A helical membrane pass occupies residues 57–77; sequence VVSSMMFGAAVGAVGSGWLSF. Over 78–84 the chain is Cytoplasmic; the sequence is KLGRKKS. The helical transmembrane segment at 85-105 threads the bilayer; sequence LMIGAILFVAGSLFSAAAPNV. At 106–112 the chain is on the periplasmic side; sequence EVLILSR. The chain crosses the membrane as a helical span at residues 113–133; the sequence is VLLGLAVGVASYTAPLYLSEI. At 134–139 the chain is on the cytoplasmic side; the sequence is APEKIR. The helical transmembrane segment at 140 to 160 threads the bilayer; that stretch reads GSMISMYQLMITIGILGAYLS. At 161–171 the chain is on the periplasmic side; sequence DTAFSYTGAWR. The chain crosses the membrane as a helical span at residues 172–192; that stretch reads WMLGVIIIPAILLLIGVFFLP. Topologically, residues 193–250 are cytoplasmic; the sequence is DSPRWFAAKRRFVDAERVLLRLRDTSAEAKRELDEIRESLQVKQSGWALFKENSNFRR. A helical membrane pass occupies residues 251–271; sequence AVFLGVLLQVMQQFTGMNVIM. Over 272–290 the chain is Periplasmic; it reads YYAPKIFELAGYTNTTEQM. A helical membrane pass occupies residues 291 to 311; it reads WGTVIVGLTNVLATFIAIGLV. Residues 312–321 are Cytoplasmic-facing; it reads DRWGRKPTLT. The helical transmembrane segment at 322-342 threads the bilayer; the sequence is LGFLVMAAGMGVLGTMMHIGI. The Periplasmic segment spans residues 343-351; that stretch reads HSPSAQYFA. A helical transmembrane segment spans residues 352–372; it reads IAMLLMFIVGFAMSAGPLIWV. At 373 to 394 the chain is on the cytoplasmic side; it reads LCSEIQPLKGRDFGITCSTATN. The helical transmembrane segment at 395-415 threads the bilayer; it reads WIANMIVGATFLTMLNTLGNA. Residue N416 is a topological domain, periplasmic. The helical transmembrane segment at 417 to 437 threads the bilayer; sequence TFWVYAALNVLFILLTLWLVP. At 438–464 the chain is on the cytoplasmic side; that stretch reads ETKHVSLEHIERNLMKGRKLREIGAHD.

It belongs to the major facilitator superfamily. Sugar transporter (TC 2.A.1.1) family.

It localises to the cell inner membrane. Its function is as follows. Uptake of galactose across the boundary membrane with the concomitant transport of protons into the cell (symport system). The sequence is that of Galactose-proton symporter (galP) from Escherichia coli O6:H1 (strain CFT073 / ATCC 700928 / UPEC).